The sequence spans 498 residues: MLSNLLILPMLLPFLCALILVFLKNNDRISKYLYLGTMTITTIISLMLLIYVQRHRPITLDFGGWTAPFGIQFLGDSLSLIMVTTASFVITLIMAYGFGRGEHKANRYHLPSFILFLSVGVIGSFLTSDLFNLYVMFEIMLLASFVLITLGQSVEQLRAAIIYVVLNIIGSWLFLLGIGLLYKTVGTLNFSHIAMRLNDMGDNRTVTMISLIFLVAFSAKAALVLFMWLPKAYAVLNTELAALFAALMTKVGAYALIRFFTLLFDQHNGLIHPLLVTMAAITMVIGAIGVIAYKDIKKIAAYQVIISIGFIILGLGTNTFAGINGAIFYLVNDIVVKTLLFFIIGSLVYITGYRQYQYLNGLAKKEPFFGVAFIIMIFAIGGVPPFSGFPGKVLIFQGALQNGNYIGLALMIITSLIAMYSLFRILFYMYFGDKDGEEVHFKKIPQYRKGILSILVVVVIAIGIAAPVLLKITNDATELNTNDQLYQKLVNSHLKGEE.

14 helical membrane-spanning segments follow: residues 2-22 (LSNLLILPMLLPFLCALILVF), 32-52 (YLYLGTMTITTIISLMLLIYV), 78-98 (LSLIMVTTASFVITLIMAYGF), 108-128 (YHLPSFILFLSVGVIGSFLTS), 130-150 (LFNLYVMFEIMLLASFVLITL), 161-181 (IIYVVLNIIGSWLFLLGIGLL), 209-229 (ISLIFLVAFSAKAALVLFMWL), 240-260 (LAALFAALMTKVGAYALIRFF), 271-291 (IHPLLVTMAAITMVIGAIGVI), 308-328 (IGFIILGLGTNTFAGINGAIF), 330-350 (LVNDIVVKTLLFFIIGSLVYI), 368-388 (FFGVAFIIMIFAIGGVPPFSG), 403-423 (GNYIGLALMIITSLIAMYSLF), and 450-470 (GILSILVVVVIAIGIAAPVLL).

Belongs to the CPA3 antiporters (TC 2.A.63) subunit D family. As to quaternary structure, may form a heterooligomeric complex that consists of seven subunits: mnhA2, mnhB2, mnhC2, mnhD2, mnhE2, mnhF2 and mnhG2.

The protein resides in the cell membrane. The polypeptide is Putative antiporter subunit mnhD2 (mnhD2) (Staphylococcus aureus (strain MRSA252)).